The primary structure comprises 595 residues: Apolipoprotein N-acyltransferase 2 (595 aa).

The next 5 membrane-spanning stretches (helical) occupy residues 30–50 (FLAFAPVSLTHFVWIAPFGFF), 63–83 (LFFHGLLIGVVFYAISFHWII), 95–115 (VVAILILLFAGLLFGLKFPIF), 167–187 (AEITGVYGISFLVFIVSYTLF), and 210–230 (FITLPALLLLTFIVSGIFLFK). The CN hydrolase domain occupies 241–555 (LNVLIVQPDA…AEALSETIDV (315 aa)). Glutamate 293 acts as the Proton acceptor in catalysis. Residue lysine 372 is part of the active site. Cysteine 463 functions as the Nucleophile in the catalytic mechanism. A helical transmembrane segment spans residues 569–589 (LIPWLMLFLTGIYYLNLLIGI).

The protein belongs to the CN hydrolase family. Apolipoprotein N-acyltransferase subfamily.

Its subcellular location is the cell inner membrane. The enzyme catalyses N-terminal S-1,2-diacyl-sn-glyceryl-L-cysteinyl-[lipoprotein] + a glycerophospholipid = N-acyl-S-1,2-diacyl-sn-glyceryl-L-cysteinyl-[lipoprotein] + a 2-acyl-sn-glycero-3-phospholipid + H(+). The protein operates within protein modification; lipoprotein biosynthesis (N-acyl transfer). In terms of biological role, catalyzes the phospholipid dependent N-acylation of the N-terminal cysteine of apolipoprotein, the last step in lipoprotein maturation. This Leptospira interrogans serogroup Icterohaemorrhagiae serovar Lai (strain 56601) protein is Apolipoprotein N-acyltransferase 2.